The sequence spans 426 residues: Serine hydroxymethyltransferase 1 (426 aa).

Residues L118 and G122–L124 each bind (6S)-5,6,7,8-tetrahydrofolate. K227 is modified (N6-(pyridoxal phosphate)lysine).

It belongs to the SHMT family. Homodimer. Pyridoxal 5'-phosphate serves as cofactor.

The protein resides in the cytoplasm. The catalysed reaction is (6R)-5,10-methylene-5,6,7,8-tetrahydrofolate + glycine + H2O = (6S)-5,6,7,8-tetrahydrofolate + L-serine. The protein operates within one-carbon metabolism; tetrahydrofolate interconversion. It functions in the pathway amino-acid biosynthesis; glycine biosynthesis; glycine from L-serine: step 1/1. In terms of biological role, catalyzes the reversible interconversion of serine and glycine with tetrahydrofolate (THF) serving as the one-carbon carrier. This reaction serves as the major source of one-carbon groups required for the biosynthesis of purines, thymidylate, methionine, and other important biomolecules. Also exhibits THF-independent aldolase activity toward beta-hydroxyamino acids, producing glycine and aldehydes, via a retro-aldol mechanism. The protein is Serine hydroxymethyltransferase 1 of Mycobacterium bovis (strain ATCC BAA-935 / AF2122/97).